A 102-amino-acid chain; its full sequence is UPF0058 protein MTH_224 (102 aa).

This sequence belongs to the UPF0058 family.

This Methanothermobacter thermautotrophicus (strain ATCC 29096 / DSM 1053 / JCM 10044 / NBRC 100330 / Delta H) (Methanobacterium thermoautotrophicum) protein is UPF0058 protein MTH_224.